Here is a 121-residue protein sequence, read N- to C-terminus: Neuromedin-B (121 aa).

Residues 1–24 (MTLRARGARLLGGLLFFTLLAAGA) form the signal peptide. At methionine 56 the chain carries Methionine amide. The propeptide occupies 60 to 121 (SLEPPNPSLL…RRLLVQTLEK (62 aa)).

This sequence belongs to the bombesin/neuromedin-B/ranatensin family. Higher expression in the central nervous system (CNS) than in peripheral tissues. Highest levels are found in the olfactory bulb. Relatively high levels in the CNS (including the cerebral cortex, cerebellum, spinal cord, medulla oblongata, midbrain, hypothalamus, hippocampus, and hypophysis) and in peripheral tissues such as the pancreas, adrenal gland, testis, ovary and cecum. Moderate levels are found in the rectum, heart and pons with low expression levels detected in the bone marrow and duodenum. Other tissues show no or low levels of expression.

The protein resides in the secreted. It is found in the cell projection. It localises to the neuron projection. Stimulates smooth muscle contraction. Induces sighing by acting directly on the pre-Botzinger complex, a cluster of several thousand neurons in the ventrolateral medulla responsible for inspiration during respiratory activity. Contributes to the induction of sneezing following exposure to chemical irritants or allergens which causes release of NMB by nasal sensory neurons and activation of NMBR-expressing neurons in the sneeze-evoking region of the brainstem. These in turn activate neurons of the caudal ventral respiratory group, giving rise to the sneezing response. Contributes to induction of acute itch, possibly through activation of the NMBR receptor on dorsal root ganglion neurons. Increases expression of NMBR and steroidogenic mediators STAR, CYP11A1 and HSD3B1 in Leydig cells, induces secretion of testosterone by Leydig cells and also promotes Leydig cell proliferation. Plays a role in the innate immune response to influenza A virus infection by enhancing interferon alpha expression and reducing expression of IL6. Plays a role in CSF1-induced proliferation of osteoclast precursors by contributing to positive regulation of the expression of the CSF1 receptor CSF1R. The protein is Neuromedin-B (NMB) of Sus scrofa (Pig).